A 404-amino-acid polypeptide reads, in one-letter code: Protein ORF23 (404 aa).

It belongs to the lymphocryptovirus BTRF1 family. Interacts with ORF34.

It localises to the host nucleus. It is found in the host cytoplasm. Its function is as follows. Plays a role in the expression of late genes. The polypeptide is Protein ORF23 (ORF23) (Homo sapiens (Human)).